We begin with the raw amino-acid sequence, 126 residues long: Ribonuclease P protein component (126 aa).

It belongs to the RnpA family. As to quaternary structure, consists of a catalytic RNA component (M1 or rnpB) and a protein subunit.

It carries out the reaction Endonucleolytic cleavage of RNA, removing 5'-extranucleotides from tRNA precursor.. RNaseP catalyzes the removal of the 5'-leader sequence from pre-tRNA to produce the mature 5'-terminus. It can also cleave other RNA substrates such as 4.5S RNA. The protein component plays an auxiliary but essential role in vivo by binding to the 5'-leader sequence and broadening the substrate specificity of the ribozyme. The polypeptide is Ribonuclease P protein component (Rhodococcus erythropolis (strain PR4 / NBRC 100887)).